The primary structure comprises 256 residues: UPF0246 protein Sbal_1048 (256 aa).

It belongs to the UPF0246 family.

The polypeptide is UPF0246 protein Sbal_1048 (Shewanella baltica (strain OS155 / ATCC BAA-1091)).